Reading from the N-terminus, the 144-residue chain is Small ribosomal subunit protein eS19A (144 aa).

Positions 83–102 are disordered; sequence VNRGMRPSHHRDGSGSVQRK.

Belongs to the eukaryotic ribosomal protein eS19 family. In terms of assembly, component of the small ribosomal subunit (SSU). Mature yeast ribosomes consist of a small (40S) and a large (60S) subunit. The 40S small subunit contains 1 molecule of ribosomal RNA (18S rRNA) and at least 33 different proteins. The large 60S subunit contains 3 rRNA molecules (25S, 5.8S and 5S rRNA) and at least 46 different proteins.

The protein localises to the cytoplasm. It localises to the nucleus. It is found in the nucleolus. In terms of biological role, component of the ribosome, a large ribonucleoprotein complex responsible for the synthesis of proteins in the cell. The small ribosomal subunit (SSU) binds messenger RNAs (mRNAs) and translates the encoded message by selecting cognate aminoacyl-transfer RNA (tRNA) molecules. The large subunit (LSU) contains the ribosomal catalytic site termed the peptidyl transferase center (PTC), which catalyzes the formation of peptide bonds, thereby polymerizing the amino acids delivered by tRNAs into a polypeptide chain. The nascent polypeptides leave the ribosome through a tunnel in the LSU and interact with protein factors that function in enzymatic processing, targeting, and the membrane insertion of nascent chains at the exit of the ribosomal tunnel. eS19 is required for proper maturation of the small (40S) ribosomal subunit. Binds to 40S pre-ribosomal particles, probably required after association of NOC4 but before association of ENP1, TSR1 and RIO2 with 20/21S pre-rRNA. The sequence is that of Small ribosomal subunit protein eS19A (rps1901) from Schizosaccharomyces pombe (strain 972 / ATCC 24843) (Fission yeast).